Here is a 140-residue protein sequence, read N- to C-terminus: ATP synthase epsilon chain (140 aa).

Belongs to the ATPase epsilon chain family. As to quaternary structure, F-type ATPases have 2 components, CF(1) - the catalytic core - and CF(0) - the membrane proton channel. CF(1) has five subunits: alpha(3), beta(3), gamma(1), delta(1), epsilon(1). CF(0) has three main subunits: a, b and c.

Its subcellular location is the cell inner membrane. Produces ATP from ADP in the presence of a proton gradient across the membrane. The sequence is that of ATP synthase epsilon chain (atpC) from Vibrio alginolyticus.